The sequence spans 113 residues: Large ribosomal subunit protein uL18 (113 aa).

Belongs to the universal ribosomal protein uL18 family. As to quaternary structure, part of the 50S ribosomal subunit; part of the 5S rRNA/L5/L18/L25 subcomplex. Contacts the 5S and 23S rRNAs.

Its function is as follows. This is one of the proteins that bind and probably mediate the attachment of the 5S RNA into the large ribosomal subunit, where it forms part of the central protuberance. This Phocaeicola vulgatus (strain ATCC 8482 / DSM 1447 / JCM 5826 / CCUG 4940 / NBRC 14291 / NCTC 11154) (Bacteroides vulgatus) protein is Large ribosomal subunit protein uL18.